The sequence spans 173 residues: Insertion element IS1397 uncharacterized 20.1 kDa protein (173 aa).

Residues 115-135 (KSMTRSDDTHENEANMTPEEM) form a disordered region.

Belongs to the IS150/IS1296 orfA family.

The protein is Insertion element IS1397 uncharacterized 20.1 kDa protein of Escherichia coli.